The sequence spans 1235 residues: UPF0507 protein DEHA2G04334g (1235 aa).

The 165-residue stretch at Gln-323–Gln-487 folds into the VPS9 domain. Positions Ser-1097–Asn-1124 are disordered. Residues Glu-1100 to Ala-1115 are compositionally biased toward low complexity.

The protein belongs to the UPF0507 family.

This chain is UPF0507 protein DEHA2G04334g, found in Debaryomyces hansenii (strain ATCC 36239 / CBS 767 / BCRC 21394 / JCM 1990 / NBRC 0083 / IGC 2968) (Yeast).